The sequence spans 144 residues: Large ribosomal subunit protein uL16 (144 aa).

It belongs to the universal ribosomal protein uL16 family. Part of the 50S ribosomal subunit.

Its function is as follows. Binds 23S rRNA and is also seen to make contacts with the A and possibly P site tRNAs. This is Large ribosomal subunit protein uL16 from Clostridium beijerinckii (strain ATCC 51743 / NCIMB 8052) (Clostridium acetobutylicum).